Consider the following 243-residue polypeptide: MYEVKLDAFNGPLDLLLHLIQKYEIDIYDIPMKALTEQYMQYVHAMNQLEINVASEYLVMASELLMIKSKLLLPQTSIEEDIEEDPREDLVGRLIEYQNYKEYTEILNTMKEERDLYFTKHPTDLTHLETNESWDPNQTIDLTELIVAYQRVKNRVELNTPKSVEIKKETFTIQQATAQVTERLKQHESFNFFSLFTFHEPVEQVVTHFLAILEMSKSGIVNIKQTKQFDDIDIIRGVNYSIG.

This sequence belongs to the ScpA family. Component of a cohesin-like complex composed of ScpA, ScpB and the Smc homodimer, in which ScpA and ScpB bind to the head domain of Smc. The presence of the three proteins is required for the association of the complex with DNA.

It is found in the cytoplasm. Functionally, participates in chromosomal partition during cell division. May act via the formation of a condensin-like complex containing Smc and ScpB that pull DNA away from mid-cell into both cell halves. This is Segregation and condensation protein A from Staphylococcus epidermidis (strain ATCC 35984 / DSM 28319 / BCRC 17069 / CCUG 31568 / BM 3577 / RP62A).